The following is a 46-amino-acid chain: uncharacterized protein (46 aa).

This is an uncharacterized protein from Shigella flexneri.